A 569-amino-acid chain; its full sequence is Membrane protein insertase YidC (569 aa).

Helical transmembrane passes span 7–24, 219–239, 299–319, 340–360, 366–386, 436–456, 485–505, and 526–546; these read VLWVIFSFSLLMLWDNYN, GSALGGGSMFMASAFTGPAIY, LYAVGTILPMGTVAPGATASM, FELVKDYGWLTIIAKPIFWLM, ILGNWGWTIIVLTIVIKLAFF, IGGCFPMLVQIPVFISLYWVL, IGTFHLTIGILPILMAISMFI, and PIAFSVMFFFFPAGLVLYWVV.

This sequence belongs to the OXA1/ALB3/YidC family. Type 1 subfamily. As to quaternary structure, interacts with the Sec translocase complex via SecD. Specifically interacts with transmembrane segments of nascent integral membrane proteins during membrane integration.

It is found in the cell inner membrane. Its function is as follows. Required for the insertion and/or proper folding and/or complex formation of integral membrane proteins into the membrane. Involved in integration of membrane proteins that insert both dependently and independently of the Sec translocase complex, as well as at least some lipoproteins. Aids folding of multispanning membrane proteins. This Herminiimonas arsenicoxydans protein is Membrane protein insertase YidC.